Here is a 119-residue protein sequence, read N- to C-terminus: Large ribosomal subunit protein uL24 (119 aa).

The protein belongs to the universal ribosomal protein uL24 family. In terms of assembly, part of the 50S ribosomal subunit.

One of two assembly initiator proteins, it binds directly to the 5'-end of the 23S rRNA, where it nucleates assembly of the 50S subunit. Its function is as follows. Located at the polypeptide exit tunnel on the outside of the subunit. In Haloquadratum walsbyi (strain DSM 16790 / HBSQ001), this protein is Large ribosomal subunit protein uL24.